A 366-amino-acid polypeptide reads, in one-letter code: Quinolinate synthase (366 aa).

Residues His-44 and Ser-61 each contribute to the iminosuccinate site. Cys-108 serves as a coordination point for [4Fe-4S] cluster. Residues 139–141 (YIN) and Ser-160 each bind iminosuccinate. Position 228 (Cys-228) interacts with [4Fe-4S] cluster. Iminosuccinate contacts are provided by residues 254 to 256 (HPE) and Thr-271. [4Fe-4S] cluster is bound at residue Cys-318.

It belongs to the quinolinate synthase family. Type 3 subfamily. The cofactor is [4Fe-4S] cluster.

Its subcellular location is the cytoplasm. The catalysed reaction is iminosuccinate + dihydroxyacetone phosphate = quinolinate + phosphate + 2 H2O + H(+). It functions in the pathway cofactor biosynthesis; NAD(+) biosynthesis; quinolinate from iminoaspartate: step 1/1. Its function is as follows. Catalyzes the condensation of iminoaspartate with dihydroxyacetone phosphate to form quinolinate. The sequence is that of Quinolinate synthase from Listeria monocytogenes serotype 4b (strain F2365).